The chain runs to 174 residues: Small ribosomal subunit protein uS5 (174 aa).

In terms of domain architecture, S5 DRBM spans 19–82; the sequence is LREKMIAINR…EEARRNMTKI (64 aa).

It belongs to the universal ribosomal protein uS5 family. In terms of assembly, part of the 30S ribosomal subunit. Contacts proteins S4 and S8.

Functionally, with S4 and S12 plays an important role in translational accuracy. Located at the back of the 30S subunit body where it stabilizes the conformation of the head with respect to the body. The protein is Small ribosomal subunit protein uS5 of Albidiferax ferrireducens (strain ATCC BAA-621 / DSM 15236 / T118) (Rhodoferax ferrireducens).